A 353-amino-acid chain; its full sequence is Chemerin-like receptor 2 (353 aa).

Residues 1-41 (MEVSKEMLFEELDNYSYALDYYSQESDPEEKVYLGLVHWIS) are Extracellular-facing. The N-linked (GlcNAc...) asparagine glycan is linked to Asn14. Residues 42–62 (LFLYALAFVLGIPGNAIVIWL) form a helical membrane-spanning segment. Over 63–73 (MGFKWKKTVTT) the chain is Cytoplasmic. A helical transmembrane segment spans residues 74–94 (LWFLNLAIADFIFVLFLPLYI). Topologically, residues 95 to 112 (SYVALSFHWPFGLWLCKV) are extracellular. A disulfide bond links Cys110 and Cys187. Residues 113 to 133 (NSFIAQLNMFSSVFFLTVISL) form a helical membrane-spanning segment. At 134–154 (DRYIHLLHPGLSHRHRTLKSS) the chain is on the cytoplasmic side. The helical transmembrane segment at 155-175 (LVVVILVWLLASLLGGPTLYF) threads the bilayer. Over 176–210 (RDTMEVNNHIICYNNFQEHELTLMRHHVLTWVKFL) the chain is Extracellular. The chain crosses the membrane as a helical span at residues 211–231 (FGYLFPLLTMSSCYLCLIFKM). The Cytoplasmic portion of the chain corresponds to 232-247 (KKRNILISRKHLWMIL). The helical transmembrane segment at 248–268 (SVVIAFLVCWTPYHLFSIWEL) threads the bilayer. Residues 269–286 (SIHHNSSFQNVLQGGIPL) are Extracellular-facing. Residues 287–307 (STGLAFLNSCLNPILYVLISK) form a helical membrane-spanning segment. Residues 308–353 (TFQARFRASVAEVLKRSLWEASCSGTVSEQLRSAETKSLSLLETAQ) are Cytoplasmic-facing.

This sequence belongs to the chemokine-like receptor (CMKLR) family. As to expression, high expressed in white adipose tissue and skeletal muscle. Expressed in hippocampus and cortex.

The protein resides in the cell membrane. In terms of biological role, receptor for chemoattractant adipokine chemerin/RARRES2 suggesting a role for this receptor in the regulation of inflammation and energy homesotasis. Signals mainly via beta-arrestin pathway. Binding of RARRES2 activates weakly G proteins, calcium mobilization and MAPK1/MAPK3 (ERK1/2) phosphorylation too. Acts also as a receptor for TAFA1, mediates its effects on neuronal stem-cell proliferation and differentiation via the activation of ROCK/ERK and ROCK/STAT3 signaling pathway. The sequence is that of Chemerin-like receptor 2 (Cmklr2) from Mus musculus (Mouse).